Here is a 130-residue protein sequence, read N- to C-terminus: Small ribosomal subunit protein uS8 (130 aa).

It belongs to the universal ribosomal protein uS8 family. As to quaternary structure, part of the 30S ribosomal subunit. Contacts proteins S5 and S12.

One of the primary rRNA binding proteins, it binds directly to 16S rRNA central domain where it helps coordinate assembly of the platform of the 30S subunit. This Buchnera aphidicola subsp. Acyrthosiphon pisum (strain 5A) protein is Small ribosomal subunit protein uS8.